A 292-amino-acid chain; its full sequence is uncharacterized protein (292 aa).

The protein resides in the virion. This is an uncharacterized protein from Acanthamoeba polyphaga (Amoeba).